Reading from the N-terminus, the 387-residue chain is MTFDPASALAEIKARDAYRWRRIVESPQDTRVVIDGAPRVNFCSNDYLGLANHPAVREAFRRGVDRWGVGSGASHLVCGHSAAHHALEEELAEFTGRPRALLFSTGYMANLGVVSALAGRGDTVFEDRLNHASLLDGGLLSGARFRRYRHADARALEAALAESRAETRLVVTDGVFSMDGDLAPLPELARVARDGRAWLMVDDAHGLGVLGAEGRGTLEHFGLGAPEVPVLVGTLGKALGTFGAFVAGSESLIDYLIQRARTYVYTTALPPAVAEATRVSLRLVREEPERRERLRCNVRRFRAGAASLGFGLGDLPGPIQPLVIGANADALEASRRLGERGFLVSAIRPPTVQAGTARLRITLSAAHSNEQIDGLLEALADAVPQEA.

Arg-19 lines the substrate pocket. Position 106–107 (106–107) interacts with pyridoxal 5'-phosphate; the sequence is GY. His-131 contacts substrate. Residues Ser-177, His-205, and Thr-234 each coordinate pyridoxal 5'-phosphate. The residue at position 237 (Lys-237) is an N6-(pyridoxal phosphate)lysine. Position 351 (Thr-351) interacts with substrate.

This sequence belongs to the class-II pyridoxal-phosphate-dependent aminotransferase family. BioF subfamily. In terms of assembly, homodimer. Pyridoxal 5'-phosphate serves as cofactor.

It carries out the reaction 6-carboxyhexanoyl-[ACP] + L-alanine + H(+) = (8S)-8-amino-7-oxononanoate + holo-[ACP] + CO2. Its pathway is cofactor biosynthesis; biotin biosynthesis. Catalyzes the decarboxylative condensation of pimeloyl-[acyl-carrier protein] and L-alanine to produce 8-amino-7-oxononanoate (AON), [acyl-carrier protein], and carbon dioxide. The polypeptide is 8-amino-7-oxononanoate synthase (Methylococcus capsulatus (strain ATCC 33009 / NCIMB 11132 / Bath)).